The sequence spans 89 residues: Small ribosomal subunit protein uS15 (89 aa).

Residues Met1–Gln10 show a composition bias toward polar residues. A disordered region spans residues Met1–Thr22.

The protein belongs to the universal ribosomal protein uS15 family. In terms of assembly, part of the 30S ribosomal subunit. Forms a bridge to the 50S subunit in the 70S ribosome, contacting the 23S rRNA.

One of the primary rRNA binding proteins, it binds directly to 16S rRNA where it helps nucleate assembly of the platform of the 30S subunit by binding and bridging several RNA helices of the 16S rRNA. Functionally, forms an intersubunit bridge (bridge B4) with the 23S rRNA of the 50S subunit in the ribosome. The sequence is that of Small ribosomal subunit protein uS15 from Nitrosomonas europaea (strain ATCC 19718 / CIP 103999 / KCTC 2705 / NBRC 14298).